A 528-amino-acid chain; its full sequence is Probable feruloyl esterase B-1 (528 aa).

Positions 1–19 (MMWWFLLIGLASAAATASS) are cleaved as a signal peptide. 6 cysteine pairs are disulfide-bonded: cysteine 29-cysteine 78, cysteine 64-cysteine 117, cysteine 190-cysteine 445, cysteine 259-cysteine 276, cysteine 285-cysteine 295, and cysteine 505-cysteine 527. Asparagine 83 and asparagine 101 each carry an N-linked (GlcNAc...) asparagine glycan. Catalysis depends on serine 191, which acts as the Acyl-ester intermediate. Ca(2+)-binding residues include aspartate 260, aspartate 263, alanine 265, aspartate 267, and isoleucine 269. N-linked (GlcNAc...) asparagine glycosylation is found at asparagine 286, asparagine 354, and asparagine 385. Active-site charge relay system residues include aspartate 404 and histidine 444.

Belongs to the tannase family.

It localises to the secreted. It catalyses the reaction feruloyl-polysaccharide + H2O = ferulate + polysaccharide.. Involved in degradation of plant cell walls. Hydrolyzes the feruloyl-arabinose ester bond in arabinoxylans as well as the feruloyl-galactose and feruloyl-arabinose ester bonds in pectin. The chain is Probable feruloyl esterase B-1 (faeB-1) from Aspergillus fumigatus (strain ATCC MYA-4609 / CBS 101355 / FGSC A1100 / Af293) (Neosartorya fumigata).